Reading from the N-terminus, the 96-residue chain is Co-chaperonin GroES (96 aa).

Belongs to the GroES chaperonin family. As to quaternary structure, heptamer of 7 subunits arranged in a ring. Interacts with the chaperonin GroEL.

It localises to the cytoplasm. Together with the chaperonin GroEL, plays an essential role in assisting protein folding. The GroEL-GroES system forms a nano-cage that allows encapsulation of the non-native substrate proteins and provides a physical environment optimized to promote and accelerate protein folding. GroES binds to the apical surface of the GroEL ring, thereby capping the opening of the GroEL channel. This chain is Co-chaperonin GroES, found in Polaromonas naphthalenivorans (strain CJ2).